The chain runs to 90 residues: Accessory gland-specific peptide 26Ab (90 aa).

Residues 1 to 21 (MNYFAVICIFSCICLWQFSDA) form the signal peptide.

Main cells and secondary cells of the accessory glands of 1 day old virgin males (at protein level). In 5 day old virgin males, only detected in the secondary cells (at protein level). Reappears in the main cells after mating (at protein level). First detected in adult males 3-4 hr after eclosion, levels increase reaching a peak at day 3-5 which is maintained until at least day 10 of adulthood (at protein level). In unmated male adults, levels are maintained for the first 6 days of adulthood and then gradually decrease for at least the next 8 days. No expression in females.

It is found in the secreted. The protein resides in the extracellular space. Its subcellular location is the cytoplasm. In terms of biological role, this protein is transferred from male to female during mating and may affect egglaying and behavior after mating. The chain is Accessory gland-specific peptide 26Ab from Drosophila melanogaster (Fruit fly).